A 361-amino-acid polypeptide reads, in one-letter code: MLYNLLLPHIHNSHIANLFHYITFRSGLAIIITLSLSFITGPILIKFLRSLQKNGQPIRSDGPESHQTKAGTPTMGGIMIILSSCLSTLLLADLTNKYIWITLFGFISFGIIGFMDDYAKVTKNNHYGVRGKSKLLLQGIISLIICILLEYLDKNPSHLLNVPFFKNLSLDLGYFYIVFAIFVIVGSSNAVNLTDGLDGLATVPIAFTAGSFALISYLVGNLIYSNYLQLTYIPNTGELTVLCAGLVGSCLGFLWFNAQPAEVFMGDTGSLSLGGVLGIISVITKHEIVLAIVGGLFVIETASVILQVYYFKATKGKRIFKMAPLHHHFEKHGWAESKVVIRFWIISVIFALIGLSSLKLR.

10 helical membrane-spanning segments follow: residues 28-48 (LAII…IKFL), 74-94 (TMGG…LADL), 99-119 (IWIT…DDYA), 133-153 (SKLL…EYLD), 168-188 (LSLD…VGSS), 203-223 (VPIA…GNLI), 236-256 (TGEL…FLWF), 263-283 (VFMG…ISVI), 288-308 (IVLA…ILQV), and 338-358 (KVVI…LSSL).

It belongs to the glycosyltransferase 4 family. MraY subfamily. Mg(2+) serves as cofactor.

The protein resides in the cell inner membrane. The enzyme catalyses UDP-N-acetyl-alpha-D-muramoyl-L-alanyl-gamma-D-glutamyl-meso-2,6-diaminopimeloyl-D-alanyl-D-alanine + di-trans,octa-cis-undecaprenyl phosphate = di-trans,octa-cis-undecaprenyl diphospho-N-acetyl-alpha-D-muramoyl-L-alanyl-D-glutamyl-meso-2,6-diaminopimeloyl-D-alanyl-D-alanine + UMP. It functions in the pathway cell wall biogenesis; peptidoglycan biosynthesis. Catalyzes the initial step of the lipid cycle reactions in the biosynthesis of the cell wall peptidoglycan: transfers peptidoglycan precursor phospho-MurNAc-pentapeptide from UDP-MurNAc-pentapeptide onto the lipid carrier undecaprenyl phosphate, yielding undecaprenyl-pyrophosphoryl-MurNAc-pentapeptide, known as lipid I. This is Phospho-N-acetylmuramoyl-pentapeptide-transferase from Rickettsia felis (strain ATCC VR-1525 / URRWXCal2) (Rickettsia azadi).